The sequence spans 195 residues: Protein GrpE (195 aa).

A disordered region spans residues 1–30 (MSEQEKVEQEEISAELETQNEQEKPMEETE). The segment covering 10-20 (EEISAELETQN) has biased composition (acidic residues).

It belongs to the GrpE family. In terms of assembly, homodimer.

The protein resides in the cytoplasm. In terms of biological role, participates actively in the response to hyperosmotic and heat shock by preventing the aggregation of stress-denatured proteins, in association with DnaK and GrpE. It is the nucleotide exchange factor for DnaK and may function as a thermosensor. Unfolded proteins bind initially to DnaJ; upon interaction with the DnaJ-bound protein, DnaK hydrolyzes its bound ATP, resulting in the formation of a stable complex. GrpE releases ADP from DnaK; ATP binding to DnaK triggers the release of the substrate protein, thus completing the reaction cycle. Several rounds of ATP-dependent interactions between DnaJ, DnaK and GrpE are required for fully efficient folding. This is Protein GrpE from Histophilus somni (strain 2336) (Haemophilus somnus).